Here is a 124-residue protein sequence, read N- to C-terminus: Small ribosomal subunit protein uS12 (124 aa).

A disordered region spans residues 1–24 (MPTINQLIKKPRKSQKEKTASPAL). Aspartate 89 carries the 3-methylthioaspartic acid modification.

It belongs to the universal ribosomal protein uS12 family. In terms of assembly, part of the 30S ribosomal subunit. Contacts proteins S8 and S17. May interact with IF1 in the 30S initiation complex.

Functionally, with S4 and S5 plays an important role in translational accuracy. Its function is as follows. Interacts with and stabilizes bases of the 16S rRNA that are involved in tRNA selection in the A site and with the mRNA backbone. Located at the interface of the 30S and 50S subunits, it traverses the body of the 30S subunit contacting proteins on the other side and probably holding the rRNA structure together. The combined cluster of proteins S8, S12 and S17 appears to hold together the shoulder and platform of the 30S subunit. The polypeptide is Small ribosomal subunit protein uS12 (Borrelia hermsii (strain HS1 / DAH)).